Here is a 349-residue protein sequence, read N- to C-terminus: N-formyl peptide receptor 3 (349 aa).

The Extracellular segment spans residues 1–27 (METNFSIPLNETEEVLPEPAGHTVLWI). N-linked (GlcNAc...) asparagine glycosylation is found at Asn-4 and Asn-10. The helical transmembrane segment at 28–50 (FSLLVHGVTFIFGVLGNGLVIWV) threads the bilayer. Topologically, residues 51–61 (AGFLMTRTVNT) are cytoplasmic. Residues 62 to 83 (ICYLNLALADFSFSAILPFHMV) traverse the membrane as a helical segment. At 84 to 100 (SVAMREKWPFGSFLCKL) the chain is on the extracellular side. A disulfide bridge connects residues Cys-98 and Cys-176. Residues 101 to 121 (VHVMIDINLFVSVYLITIIAL) traverse the membrane as a helical segment. Residues 122-140 (DRCICVLHPAWAQNHRTMS) are Cytoplasmic-facing. Residues 141–162 (LAKRVMTGLWILTIVLTLPNFI) traverse the membrane as a helical segment. Residues 163 to 205 (FWTTISTTNGDTYCIFNFPFWGDTAVERLNVFITMAKVFLILH) are Extracellular-facing. Residues 206–226 (FIIGFSMPMSIITVCYGIIAA) form a helical membrane-spanning segment. Over 227–242 (KIHRNHMIKSSRPLRV) the chain is Cytoplasmic. A helical membrane pass occupies residues 243 to 266 (FAAVVASFFICWFPYELIGILMAV). Residues 267–286 (WLKEMLLNGKYKIILVLINP) are Extracellular-facing. Residues 287–306 (TSSLAFFNSCLNPILYVFLG) form a helical membrane-spanning segment. Over 307-349 (SNFQERLIRSLPTSLERALTEVPDSAQTSNTHTTSASPPEETE) the chain is Cytoplasmic. Residues 327 to 349 (EVPDSAQTSNTHTTSASPPEETE) are disordered. Over residues 331-343 (SAQTSNTHTTSAS) the composition is skewed to polar residues.

The protein belongs to the G-protein coupled receptor 1 family.

The protein localises to the cell membrane. In terms of biological role, low affinity receptor for N-formyl-methionyl peptides, which are powerful neutrophils chemotactic factors. Binding of FMLP to the receptor causes activation of neutrophils. This response is mediated via a G-protein that activates a phosphatidylinositol-calcium second messenger system. This chain is N-formyl peptide receptor 3 (FPR3), found in Gorilla gorilla gorilla (Western lowland gorilla).